Here is a 317-residue protein sequence, read N- to C-terminus: Acetyl-coenzyme A carboxylase carboxyl transferase subunit alpha (317 aa).

The region spanning 40–293 is the CoA carboxyltransferase C-terminal domain; sequence LEVRVREAIV…GDVIASALAE (254 aa).

It belongs to the AccA family. Acetyl-CoA carboxylase is a heterohexamer composed of biotin carboxyl carrier protein (AccB), biotin carboxylase (AccC) and two subunits each of ACCase subunit alpha (AccA) and ACCase subunit beta (AccD).

It localises to the cytoplasm. The enzyme catalyses N(6)-carboxybiotinyl-L-lysyl-[protein] + acetyl-CoA = N(6)-biotinyl-L-lysyl-[protein] + malonyl-CoA. Its pathway is lipid metabolism; malonyl-CoA biosynthesis; malonyl-CoA from acetyl-CoA: step 1/1. In terms of biological role, component of the acetyl coenzyme A carboxylase (ACC) complex. First, biotin carboxylase catalyzes the carboxylation of biotin on its carrier protein (BCCP) and then the CO(2) group is transferred by the carboxyltransferase to acetyl-CoA to form malonyl-CoA. The chain is Acetyl-coenzyme A carboxylase carboxyl transferase subunit alpha from Rhizobium johnstonii (strain DSM 114642 / LMG 32736 / 3841) (Rhizobium leguminosarum bv. viciae).